The sequence spans 66 residues: Conotoxin Cl14.1b (66 aa).

Residues 1–19 (MNVTVMFLVLLLTMPLTDG) form the signal peptide. Positions 20-47 (FNIRAINGGELFGLVQRDAGNALDHGFY) are excised as a propeptide.

It belongs to the conotoxin L superfamily. Contains 2 disulfide bonds. Expressed by the venom duct.

Its subcellular location is the secreted. This Californiconus californicus (California cone) protein is Conotoxin Cl14.1b.